The primary structure comprises 158 residues: Cyclic pyranopterin monophosphate synthase (158 aa).

Residues Leu76 to His78 and Met114 to Glu115 contribute to the substrate site. Asp129 is an active-site residue.

Belongs to the MoaC family. Homohexamer; trimer of dimers.

It carries out the reaction (8S)-3',8-cyclo-7,8-dihydroguanosine 5'-triphosphate = cyclic pyranopterin phosphate + diphosphate. The protein operates within cofactor biosynthesis; molybdopterin biosynthesis. Functionally, catalyzes the conversion of (8S)-3',8-cyclo-7,8-dihydroguanosine 5'-triphosphate to cyclic pyranopterin monophosphate (cPMP). In Shewanella woodyi (strain ATCC 51908 / MS32), this protein is Cyclic pyranopterin monophosphate synthase.